The sequence spans 431 residues: Enolase (431 aa).

Q166 is a (2R)-2-phosphoglycerate binding site. The active-site Proton donor is E208. 3 residues coordinate Mg(2+): D245, E288, and D315. (2R)-2-phosphoglycerate contacts are provided by K340, R369, S370, and K391. The Proton acceptor role is filled by K340.

The protein belongs to the enolase family. Requires Mg(2+) as cofactor.

It localises to the cytoplasm. Its subcellular location is the secreted. It is found in the cell surface. The catalysed reaction is (2R)-2-phosphoglycerate = phosphoenolpyruvate + H2O. The protein operates within carbohydrate degradation; glycolysis; pyruvate from D-glyceraldehyde 3-phosphate: step 4/5. Catalyzes the reversible conversion of 2-phosphoglycerate (2-PG) into phosphoenolpyruvate (PEP). It is essential for the degradation of carbohydrates via glycolysis. In Clostridium tetani (strain Massachusetts / E88), this protein is Enolase.